The chain runs to 371 residues: T-cell acute lymphocytic leukemia protein 1 (371 aa).

Residues 1 to 71 (MMEKRQPELC…DVPLQNSSNG (71 aa)) are disordered. The span at 34 to 57 (GCKEDEESKREEGDKEGGGRFKGD) shows a compositional bias: basic and acidic residues. The bHLH domain maps to 204–256 (VRRIFTNSRERWRQQNVNGAFAELRKLIPTHPPDKKLSKNEILRLAMKYISFL). The tract at residues 263–371 (QDGGRNVSST…GRPLDGSSRR (109 aa)) is disordered. Over residues 293-305 (HQDRVVGLARDDI) the composition is skewed to basic and acidic residues. The span at 321 to 335 (GDADGSPESFMEDQD) shows a compositional bias: acidic residues.

As to expression, expressed in the main hemopoietic organs in adults, namely the kidney and the spleen. Also expressed in the liver, brain, gill and gonads.

Its subcellular location is the nucleus. Its function is as follows. Transcription factor that plays a pivotal role in hemopoietic and endothelial development. The sequence is that of T-cell acute lymphocytic leukemia protein 1 from Takifugu rubripes (Japanese pufferfish).